We begin with the raw amino-acid sequence, 528 residues long: GMP synthase [glutamine-hydrolyzing] (528 aa).

Positions 3–199 (KVAIIDFGSQ…FLDIAGCQKD (197 aa)) constitute a Glutamine amidotransferase type-1 domain. Cysteine 83 (nucleophile) is an active-site residue. Residues histidine 174 and glutamate 176 contribute to the active site. The region spanning 200–394 (WTVTSFIDDQ…LGISTEILMR (195 aa)) is the GMPS ATP-PPase domain. 227-233 (SGGVDSS) is an ATP binding site.

Homodimer.

It carries out the reaction XMP + L-glutamine + ATP + H2O = GMP + L-glutamate + AMP + diphosphate + 2 H(+). It participates in purine metabolism; GMP biosynthesis; GMP from XMP (L-Gln route): step 1/1. Its function is as follows. Catalyzes the synthesis of GMP from XMP. The chain is GMP synthase [glutamine-hydrolyzing] from Ehrlichia ruminantium (strain Gardel).